Reading from the N-terminus, the 174-residue chain is Large ribosomal subunit protein uL5 (174 aa).

Belongs to the universal ribosomal protein uL5 family. As to quaternary structure, part of the 50S ribosomal subunit; contacts the 5S rRNA and probably tRNA. Forms a bridge to the 30S subunit in the 70S ribosome.

This is one of the proteins that bind and probably mediate the attachment of the 5S RNA into the large ribosomal subunit, where it forms part of the central protuberance. In the 70S ribosome it contacts protein S13 of the 30S subunit (bridge B1b), connecting the 2 subunits; this bridge is implicated in subunit movement. May contact the P site tRNA; the 5S rRNA and some of its associated proteins might help stabilize positioning of ribosome-bound tRNAs. The protein is Large ribosomal subunit protein uL5 of Halorubrum lacusprofundi (strain ATCC 49239 / DSM 5036 / JCM 8891 / ACAM 34).